Here is a 296-residue protein sequence, read N- to C-terminus: MPSLKDLRNRITSVKATQKITKAMQMVAAAKLRRAQNAAENGRPYAERMAQVLGNLAGNLIGGVGAPRLLSGTGQDRVHLLVVCTGDRGLAGAFNSSIARLARDHANRLMADGKTVKIITIGKKGLDVLRRQFRDQIIASRDIRGNKPVDYPFAAEIADDILARFEAGEFDVATLFYSEFRSVISQIPTAQKLIPAELPTAEGASATGAGSDAAMEFEPNEETILETLLPKNLTVQIFRALLENAASEQGARMSAMDSATRNAGEMIKKQTLIYNRTRQAMITKELIEIISGAEAL.

It belongs to the ATPase gamma chain family. F-type ATPases have 2 components, CF(1) - the catalytic core - and CF(0) - the membrane proton channel. CF(1) has five subunits: alpha(3), beta(3), gamma(1), delta(1), epsilon(1). CF(0) has three main subunits: a, b and c.

Its subcellular location is the cell inner membrane. Functionally, produces ATP from ADP in the presence of a proton gradient across the membrane. The gamma chain is believed to be important in regulating ATPase activity and the flow of protons through the CF(0) complex. This chain is ATP synthase gamma chain, found in Methylorubrum extorquens (strain CM4 / NCIMB 13688) (Methylobacterium extorquens).